Consider the following 455-residue polypeptide: Tumor necrosis factor receptor superfamily member 1A (455 aa).

Residues 1–29 form the signal peptide; it reads MGLSTVPDLLLPLVLLELLVGIYPSGVIG. Residues 30–211 lie on the Extracellular side of the membrane; that stretch reads LVPHLGDREK…VKGTEDSGTT (182 aa). TNFR-Cys repeat units follow at residues 43–82, 83–125, 126–166, and 167–196; these read VCPQ…TDCR, ECES…DTVC, GCRK…NTVC, and TCHA…KLCL. Cystine bridges form between cysteine 44/cysteine 58, cysteine 59/cysteine 72, cysteine 62/cysteine 81, cysteine 84/cysteine 99, cysteine 102/cysteine 117, cysteine 105/cysteine 125, and cysteine 127/cysteine 143. A glycan (N-linked (GlcNAc...) asparagine) is linked at asparagine 54. Residues asparagine 145 and asparagine 151 are each glycosylated (N-linked (GlcNAc...) asparagine). 5 disulfide bridges follow: cysteine 146–cysteine 158, cysteine 149–cysteine 166, cysteine 168–cysteine 179, cysteine 182–cysteine 195, and cysteine 185–cysteine 191. The helical transmembrane segment at 212-232 threads the bilayer; the sequence is VLLPLVIFFGLCLLSLLFIGL. The Cytoplasmic segment spans residues 233–455; it reads MYRYQRWKSK…ALPPAPSLLR (223 aa). Residues 254-273 are disordered; that stretch reads EKEGELEGTTTKPLAPNPSF. Residues 338–348 form an N-SMase activation domain (NSD) region; the sequence is LQKWEDSAHKP. Residues 356 to 441 enclose the Death domain; the sequence is PATLYAVVEN…GCLEDIEEAL (86 aa). Residue arginine 376 is glycosylated ((Microbial infection) N-beta-linked (GlcNAc) arginine).

Binding of TNF to the extracellular domain leads to homotrimerization. The aggregated death domains provide a novel molecular interface that interacts specifically with the death domain of TRADD. Various TRADD-interacting proteins such as TRAFS, RIPK1 and possibly FADD, are recruited to the complex by their association with TRADD. This complex activates at least two distinct signaling cascades, apoptosis and NF-kappa-B signaling. Interacts with BAG4, BABAM2, FEM1B, GRB2, SQSTM1 and TRPC4AP. Interacts directly with NOL3 (via CARD domain); inhibits TNF-signaling pathway. Interacts with SH3RF2, TRADD and RIPK1. SH3RF2 facilitates the recruitment of RIPK1 and TRADD to TNFRSF1A in a TNF-alpha-dependent process. Interacts with PGLYRP1; this interaction is important for cell death induction. Interacts (via death domain) with MADD (via death domain). In terms of assembly, (Microbial infection) Interacts with mumps virus protein SH; this interaction inhibits downstream NF-kappa-B pathway activation. As to quaternary structure, (Microbial infection) Interacts with HCV core protein. (Microbial infection) Interacts with human cytomegalovirus/HHV-5 protein UL138. In terms of assembly, (Microbial infection) Interacts with host TNFRSF1A; this interaction leads to the stimulation of both surface expression and shedding of TNFRSF1A. In terms of processing, the soluble form is produced from the membrane form by proteolytic processing. (Microbial infection) Glycosylated at Arg-376 by enteropathogenic E.coli protein NleB1 and S.typhimurium protein Ssek3: arginine GlcNAcylation prevents homotypic/heterotypic death domain interactions.

It localises to the cell membrane. The protein resides in the golgi apparatus membrane. Its subcellular location is the secreted. Its function is as follows. Receptor for TNFSF2/TNF-alpha and homotrimeric TNFSF1/lymphotoxin-alpha. The adapter molecule FADD recruits caspase-8 to the activated receptor. The resulting death-inducing signaling complex (DISC) performs caspase-8 proteolytic activation which initiates the subsequent cascade of caspases (aspartate-specific cysteine proteases) mediating apoptosis. Contributes to the induction of non-cytocidal TNF effects including anti-viral state and activation of the acid sphingomyelinase. The polypeptide is Tumor necrosis factor receptor superfamily member 1A (TNFRSF1A) (Homo sapiens (Human)).